The primary structure comprises 685 residues: Putative mannosyltransferase YycA (685 aa).

6 consecutive transmembrane segments (helical) span residues 6–26 (FDAA…YHIW), 68–88 (VLWI…SVII), 109–129 (FGVG…IAVA), 154–174 (AVKQ…GLAF), 176–196 (MKMM…LIAS), and 204–224 (IGSL…WAIA). Positions 269-347 (MNAAGGGNMQ…GGGGGKSVNM (79 aa)) are disordered. Residues 277 to 286 (MQNQDNMQAP) show a composition bias toward polar residues. Residues 287-303 (NGNGSSFSQNGNQSFGN) show a composition bias toward low complexity. The segment covering 318–343 (LNGGGGTPPTGGNGPGNGGPGGGGGK) has biased composition (gly residues). 7 helical membrane passes run 363–383 (LSGQ…GAII), 399–419 (TLFW…AGFF), 422–442 (YYLI…WYTM), 455–475 (YLLP…LSAY), 479–499 (IGSV…LALL), 513–533 (IISL…PLLY), and 573–593 (TGEE…YIIY). The segment at 652 to 685 (TSDEYSGSSSSTNSVQGMRRGPGGESQQTLYLVE) is disordered. Residues 654-665 (DEYSGSSSSTNS) show a composition bias toward low complexity. The span at 676–685 (ESQQTLYLVE) shows a compositional bias: polar residues.

Belongs to the glycosyltransferase 39 family.

The protein localises to the cell membrane. The protein is Putative mannosyltransferase YycA (yycA) of Bacillus subtilis (strain 168).